The primary structure comprises 1230 residues: MYIKRVIIKGFKTYRNETIIDNFSPHQNVIIGSNGSGKSNFFAAIRFVLSDDYSNLKREERQGLIHQGSGGSVMSASVEIVFHDPDHSMILPSGVLSRGDDEVTIRRTVGLKKDDYQLNDRNVTKGDIVRMLETAGFSMNNPYNIVPQGKIVALTNAKDKERLQLLEDVVGAKSFEVKLKASLKKMEETEQKKIQINKEMGELNSKLSEMEQERKELEKYNELERNRKIYQFTLYDRELNEVINQMERLDGDYNNTVYSSEQYIQELDKREDMIDQVSKKLSSIEASLKIKNATDLQQAKLRESEISQKLTNVNVKIKDVQQQIESNEEQRNLDSATLKEIKSIIEQRKQKLSKILPRYQELTKEEAMYKLQLASLQQKQRDLILKKGEYARFKSKDERDTWIHSEIEELKSSIQNLNELESQLQMDRTSLRKQYSAIDEEIEELIDSINGPDTKGQLEDFDSELIHLKQKLSESLDTRKELWRKEQKLQTVLETLLSDVNQNQRNVNETMSRSLANGIINVKEITEKLKISPESVFGTLGELIKVNDKYKTCAEVIGGNSLFHIVVDTEETATLIMNELYRMKGGRVTFIPLNRLSLDSDVKFPSNTTTQIQFTPLIKKIKYEPRFEKAVKHVFGKTIVVKDLGQGLKLAKKHKLNAITLDGDRADKRGVLTGGYLDQHKRTRLESLKNLNESRSQHKKILEELDFVRNELNDIDTKIDQVNGNIRKVSNDRESVLTNIEVYRTSLNTKKNEKLILEESLNAIILKLEKLNTNRTFAQEKLNTFENDLLQEFDSELSKEEKERLESLTKEISAAHNKLNITSDALEGITTTIDSLNAELESKLIPQENDLESKMSEVGDAFIFGLQDELKELQLEKESVEKQHENAVLELGTVQREIESLIAEETNNKKLLEKANNQQRLLLKKLDNFQKSVEKTMIKKTTLVTRREELQQRIREIGLLPEDALVNDFSDITSDQLLQRLNDMNTEISGLKNVNKRAFENFKKFNERRKDLAERASELDESKDSIQDLIVKLKQQKVNAVDSTFQKVSENFEAVFERLVPRGTAKLIIHRKNDNANDHDESIDVDMDAESNESQNGKDSEIMYTGVSISVSFNSKQNEQLHVEQLSGGQKTVCAIALILAIQMVDPASFYLFDEIDAALDKQYRTAVATLLKELSKNAQFICTTFRTDMLQVADKFFRVKYENKISTVIEVNREEAIGFIRGSNKFAEV.

Position 32–39 (32–39 (GSNGSGKS)) interacts with ATP. K112 and K113 each carry N6-acetyllysine. Residues 172–482 (AKSFEVKLKA…SESLDTRKEL (311 aa)) are a coiled coil. Residues 535–651 (SVFGTLGELI…KDLGQGLKLA (117 aa)) enclose the SMC hinge domain. A coiled-coil region spans residues 685–1041 (LESLKNLNES…KLKQQKVNAV (357 aa)). Residues 1078 to 1097 (DHDESIDVDMDAESNESQNG) are disordered.

This sequence belongs to the SMC family. SMC3 subfamily. In terms of assembly, cohesin complexes are composed of the SMC1 and SMC3 heterodimer attached via their SMC hinge domain, MCD1/SCC1 which link them, and IRR1/SCC3, which interacts with MCD1. The cohesin complex also interacts with SCC2, which is required for its association with chromosomes. Acetylation at Lys-112 and Lys-113 by ECO1 is important for genome stability and S phase sister chromatid cohesion.

Its subcellular location is the nucleus. It localises to the chromosome. Involved in chromosome cohesion during cell cycle and in DNA repair. Central component of cohesin complex. The cohesin complex is required for the cohesion of sister chromatids after DNA replication. The cohesin complex apparently forms a large proteinaceous ring within which sister chromatids can be trapped. At anaphase, the complex is cleaved and dissociates from chromatin, allowing sister chromatids to segregate. The polypeptide is Structural maintenance of chromosomes protein 3 (SMC3) (Saccharomyces cerevisiae (strain ATCC 204508 / S288c) (Baker's yeast)).